Consider the following 262-residue polypeptide: Ornithine carbamoyltransferase (262 aa).

Carbamoyl phosphate contacts are provided by residues 3 to 7 (STRTR), Gln30, Arg54, and 81 to 84 (HPTQ). L-ornithine-binding positions include Asn114, Asp178, and 182 to 183 (SM). Residues 219–222 (HCLP) and Thr247 contribute to the carbamoyl phosphate site.

This sequence belongs to the aspartate/ornithine carbamoyltransferase superfamily. OTCase family.

The protein localises to the cytoplasm. The enzyme catalyses carbamoyl phosphate + L-ornithine = L-citrulline + phosphate + H(+). It participates in amino-acid biosynthesis; L-arginine biosynthesis; L-arginine from L-ornithine and carbamoyl phosphate: step 1/3. Reversibly catalyzes the transfer of the carbamoyl group from carbamoyl phosphate (CP) to the N(epsilon) atom of ornithine (ORN) to produce L-citrulline. The sequence is that of Ornithine carbamoyltransferase (argF) from Neisseria lactamica.